Reading from the N-terminus, the 134-residue chain is Small ribosomal subunit protein uS8c (134 aa).

This sequence belongs to the universal ribosomal protein uS8 family. Part of the 30S ribosomal subunit.

It is found in the plastid. Its subcellular location is the chloroplast. One of the primary rRNA binding proteins, it binds directly to 16S rRNA central domain where it helps coordinate assembly of the platform of the 30S subunit. This Aethionema cordifolium (Lebanon stonecress) protein is Small ribosomal subunit protein uS8c (rps8).